We begin with the raw amino-acid sequence, 84 residues long: ATP synthase subunit c (84 aa).

A run of 2 helical transmembrane segments spans residues 9–29 (IIGASILLAFAALGTAIGFAI) and 54–74 (IVAGLLDAIAMIAVGISLLFI).

Belongs to the ATPase C chain family. As to quaternary structure, F-type ATPases have 2 components, F(1) - the catalytic core - and F(0) - the membrane proton channel. F(1) has five subunits: alpha(3), beta(3), gamma(1), delta(1), epsilon(1). F(0) has three main subunits: a(1), b(2) and c(10-14). The alpha and beta chains form an alternating ring which encloses part of the gamma chain. F(1) is attached to F(0) by a central stalk formed by the gamma and epsilon chains, while a peripheral stalk is formed by the delta and b chains.

The protein localises to the cell inner membrane. In terms of biological role, f(1)F(0) ATP synthase produces ATP from ADP in the presence of a proton or sodium gradient. F-type ATPases consist of two structural domains, F(1) containing the extramembraneous catalytic core and F(0) containing the membrane proton channel, linked together by a central stalk and a peripheral stalk. During catalysis, ATP synthesis in the catalytic domain of F(1) is coupled via a rotary mechanism of the central stalk subunits to proton translocation. Key component of the F(0) channel; it plays a direct role in translocation across the membrane. A homomeric c-ring of between 10-14 subunits forms the central stalk rotor element with the F(1) delta and epsilon subunits. This chain is ATP synthase subunit c, found in Glaesserella parasuis serovar 5 (strain SH0165) (Haemophilus parasuis).